A 364-amino-acid chain; its full sequence is Histidinol-phosphate aminotransferase 1 (364 aa).

An N6-(pyridoxal phosphate)lysine modification is found at Lys211.

The protein belongs to the class-II pyridoxal-phosphate-dependent aminotransferase family. Histidinol-phosphate aminotransferase subfamily. In terms of assembly, homodimer. It depends on pyridoxal 5'-phosphate as a cofactor.

The catalysed reaction is L-histidinol phosphate + 2-oxoglutarate = 3-(imidazol-4-yl)-2-oxopropyl phosphate + L-glutamate. It functions in the pathway amino-acid biosynthesis; L-histidine biosynthesis; L-histidine from 5-phospho-alpha-D-ribose 1-diphosphate: step 7/9. This chain is Histidinol-phosphate aminotransferase 1, found in Legionella pneumophila subsp. pneumophila (strain Philadelphia 1 / ATCC 33152 / DSM 7513).